Reading from the N-terminus, the 326-residue chain is Ribosomal RNA small subunit methyltransferase H (326 aa).

Residues 35–37, aspartate 53, phenylalanine 80, aspartate 101, and glutamine 108 each bind S-adenosyl-L-methionine; that span reads GGY. The disordered stretch occupies residues 260 to 306; it reads EGVSRHLPQASNAGAGNPPPSFQAVSRRAVKPLDAETRVNPRSRSAR.

This sequence belongs to the methyltransferase superfamily. RsmH family.

It localises to the cytoplasm. The enzyme catalyses cytidine(1402) in 16S rRNA + S-adenosyl-L-methionine = N(4)-methylcytidine(1402) in 16S rRNA + S-adenosyl-L-homocysteine + H(+). Its function is as follows. Specifically methylates the N4 position of cytidine in position 1402 (C1402) of 16S rRNA. The chain is Ribosomal RNA small subunit methyltransferase H from Rhodospirillum rubrum (strain ATCC 11170 / ATH 1.1.1 / DSM 467 / LMG 4362 / NCIMB 8255 / S1).